We begin with the raw amino-acid sequence, 552 residues long: Chaperonin GroEL (552 aa).

Residues 30–33 (TLGP), K51, 87–91 (DGTTT), G415, 480–482 (NAA), and D496 contribute to the ATP site.

It belongs to the chaperonin (HSP60) family. Forms a cylinder of 14 subunits composed of two heptameric rings stacked back-to-back. Interacts with the co-chaperonin GroES.

The protein resides in the cytoplasm. The catalysed reaction is ATP + H2O + a folded polypeptide = ADP + phosphate + an unfolded polypeptide.. Functionally, together with its co-chaperonin GroES, plays an essential role in assisting protein folding. The GroEL-GroES system forms a nano-cage that allows encapsulation of the non-native substrate proteins and provides a physical environment optimized to promote and accelerate protein folding. In Verminephrobacter eiseniae (strain EF01-2), this protein is Chaperonin GroEL.